A 284-amino-acid chain; its full sequence is Pseudouridine-5'-phosphate glycosidase (284 aa).

The active-site Proton donor is Glu8. Residues Lys69 and Val89 each contribute to the substrate site. Asp119 lines the Mn(2+) pocket. Residue 121 to 123 coordinates substrate; the sequence is SQD. The Nucleophile role is filled by Lys140.

The protein belongs to the pseudouridine-5'-phosphate glycosidase family. In terms of assembly, homotrimer. Mn(2+) is required as a cofactor.

It catalyses the reaction D-ribose 5-phosphate + uracil = psi-UMP + H2O. Catalyzes the reversible cleavage of pseudouridine 5'-phosphate (PsiMP) to ribose 5-phosphate and uracil. Functions biologically in the cleavage direction, as part of a pseudouridine degradation pathway. This Pseudothermotoga lettingae (strain ATCC BAA-301 / DSM 14385 / NBRC 107922 / TMO) (Thermotoga lettingae) protein is Pseudouridine-5'-phosphate glycosidase.